Consider the following 368-residue polypeptide: Abasic site processing protein YMR114C (368 aa).

The active-site Nucleophile is the Cys-2. The residue at position 2 (Cys-2) is a Thiazolidine linkage to a ring-opened DNA abasic site. Residues 25–48 (VNTPKDASSNSQHPHDEEDTKDQP) form a disordered region. Over residues 37-46 (HPHDEEDTKD) the composition is skewed to basic and acidic residues. Glu-132 is an active-site residue. A disordered region spans residues 270–368 (LENDNEQGID…DSRGKKKIKK (99 aa)). 3 stretches are compositionally biased toward basic and acidic residues: residues 281–296 (RGVK…DVFN), 304–313 (NSYDGLKKNE), and 326–349 (IGDR…EKRN). Residue Ser-338 is modified to Phosphoserine.

It belongs to the SOS response-associated peptidase family.

It is found in the chromosome. With respect to regulation, formation and reversal of DNA-protein cross-link depends on DNA context. Catalyzes formation of the thiazolidine linkage in presence of abasic sites in single-stranded DNA. Mediates the reversal of the thiazolidine cross-link in presence of double stranded DNA. Functionally, sensor of abasic sites in single-stranded DNA (ssDNA) required to preserve genome integrity by promoting error-free repair of abasic sites. Recognizes and binds abasic sites in ssDNA at replication forks and chemically modifies the lesion by forming a covalent cross-link with DNA: forms a stable thiazolidine linkage between a ring-opened abasic site and the alpha-amino and sulfhydryl substituents of its N-terminal catalytic cysteine residue. The DNA-protein cross-link is then reversed: able to catalyze the reversal of the thiazolidine cross-link and cycle between a cross-link and a non-cross-linked state depending on DNA context: mediates self-reversal of the thiazolidine cross-link in double stranded DNA. Acts as a protease: mediates autocatalytic processing of its N-terminal methionine in order to expose the catalytic cysteine. The chain is Abasic site processing protein YMR114C from Saccharomyces cerevisiae (strain ATCC 204508 / S288c) (Baker's yeast).